A 142-amino-acid chain; its full sequence is Transcriptional regulator MraZ (142 aa).

SpoVT-AbrB domains follow at residues 5–51 (ASSL…PRPV) and 77–120 (ASDV…DAAR).

Belongs to the MraZ family. Forms oligomers.

It is found in the cytoplasm. The protein resides in the nucleoid. The sequence is that of Transcriptional regulator MraZ from Herminiimonas arsenicoxydans.